A 362-amino-acid polypeptide reads, in one-letter code: Vignain (362 aa).

The N-terminal stretch at 1-20 is a signal peptide; it reads MATKKLLWVVLSFSLVLGVA. Residues 21-131 constitute a propeptide, activation peptide; the sequence is NSFDFHDKDL…YEKVVSVPPS (111 aa). 3 disulfide bridges follow: Cys-149-Cys-191, Cys-183-Cys-224, and Cys-282-Cys-334. Cys-152 is an active-site residue. Active-site residues include His-288 and Asn-309. N-linked (GlcNAc...) asparagine glycans are attached at residues Asn-326 and Asn-346. A Prevents secretion from ER motif is present at residues 359–362; the sequence is KDEL.

The protein belongs to the peptidase C1 family. Monomer.

Its subcellular location is the endoplasmic reticulum lumen. In terms of biological role, thought to be involved in the hydrolysis of stored seed proteins. This is Vignain from Phaseolus vulgaris (Kidney bean).